The chain runs to 143 residues: Ribonuclease HI (143 aa).

In terms of domain architecture, RNase H type-1 spans 1-136 (MQEIEIFCDG…CDSLAKLEAQ (136 aa)). The Mg(2+) site is built by aspartate 9, glutamate 47, aspartate 69, and aspartate 128.

This sequence belongs to the RNase H family. Monomer. It depends on Mg(2+) as a cofactor.

Its subcellular location is the cytoplasm. It carries out the reaction Endonucleolytic cleavage to 5'-phosphomonoester.. Its function is as follows. Endonuclease that specifically degrades the RNA of RNA-DNA hybrids. This chain is Ribonuclease HI (rnhA), found in Helicobacter pylori (strain ATCC 700392 / 26695) (Campylobacter pylori).